The following is a 210-amino-acid chain: Proteasome subunit beta (210 aa).

A propeptide spans 1 to 9 (MDNDKYLKG) (removed in mature form; by autocatalysis). The active-site Nucleophile is the Thr10.

This sequence belongs to the peptidase T1B family. As to quaternary structure, the 20S proteasome core is composed of 14 alpha and 14 beta subunits that assemble into four stacked heptameric rings, resulting in a barrel-shaped structure. The two inner rings, each composed of seven catalytic beta subunits, are sandwiched by two outer rings, each composed of seven alpha subunits. The catalytic chamber with the active sites is on the inside of the barrel. Has a gated structure, the ends of the cylinder being occluded by the N-termini of the alpha-subunits. Is capped at one or both ends by the proteasome regulatory ATPase, PAN.

The protein localises to the cytoplasm. It catalyses the reaction Cleavage of peptide bonds with very broad specificity.. Its activity is regulated as follows. The formation of the proteasomal ATPase PAN-20S proteasome complex, via the docking of the C-termini of PAN into the intersubunit pockets in the alpha-rings, triggers opening of the gate for substrate entry. Interconversion between the open-gate and close-gate conformations leads to a dynamic regulation of the 20S proteasome proteolysis activity. In terms of biological role, component of the proteasome core, a large protease complex with broad specificity involved in protein degradation. The polypeptide is Proteasome subunit beta (Methanosarcina mazei (strain ATCC BAA-159 / DSM 3647 / Goe1 / Go1 / JCM 11833 / OCM 88) (Methanosarcina frisia)).